Consider the following 179-residue polypeptide: Ubiquitin-conjugating enzyme E2 2 (179 aa).

The interval 1 to 28 (MSTPARRRLMRDFKRMQQDPPSGVSASP) is disordered. The UBC core domain occupies 4-150 (PARRRLMRDF…VRETVENSWN (147 aa)). Residue cysteine 88 is the Glycyl thioester intermediate of the active site. The interval 145-179 (VENSWNDDDDEEEEEEDEDEAEDEDDDDDDNIDED) is disordered. Residues 149 to 179 (WNDDDDEEEEEEDEDEAEDEDDDDDDNIDED) show a composition bias toward acidic residues. The interval 151-179 (DDDDEEEEEEDEDEAEDEDDDDDDNIDED) is acidic tail.

The protein belongs to the ubiquitin-conjugating enzyme family.

It localises to the cytoplasm. It is found in the nucleus. The catalysed reaction is S-ubiquitinyl-[E1 ubiquitin-activating enzyme]-L-cysteine + [E2 ubiquitin-conjugating enzyme]-L-cysteine = [E1 ubiquitin-activating enzyme]-L-cysteine + S-ubiquitinyl-[E2 ubiquitin-conjugating enzyme]-L-cysteine.. The protein operates within protein modification; protein ubiquitination. Catalyzes the covalent attachment of ubiquitin to other proteins. Plays a role in transcription regulation by catalyzing the monoubiquitination of histone H2B to form H2BK123ub1. H2BK123ub1 gives a specific tag for epigenetic transcriptional activation and is also a prerequisite for H3K4me and H3K79me formation. Also involved in postreplication repair of UV-damaged DNA, in N-end rule-dependent protein degradation and in sporulation. This chain is Ubiquitin-conjugating enzyme E2 2 (UBC2), found in Candida albicans (strain SC5314 / ATCC MYA-2876) (Yeast).